The sequence spans 308 residues: Zinc transporter ZIP9 (308 aa).

The chain crosses the membrane as a helical span at residues 4-24 (FLSISLLSVAMLVGCYVAGII). An N-linked (GlcNAc...) asparagine glycan is attached at asparagine 29. The next 5 helical transmembrane spans lie at 35 to 55 (LKLVTVLGAGLLCGTALAVIV), 107 to 127 (AYIGVSLVLGFVFMLLVDQIG), 147 to 167 (ITTTLGLVVHAAADGVALGAA), 177 to 197 (LIVFVAIMLHKAPAAFGLVSF), and 211 to 231 (HLLVFALAAPAMSMLTYLGLS). Asparagine 242 is a glycosylation site (N-linked (GlcNAc...) asparagine). The next 2 helical transmembrane spans lie at 245–265 (GVAMLFSAGTFLYVATVHVLP) and 287–307 (LEVAALVLGCLIPLILSIGHQ).

The protein belongs to the ZIP transporter (TC 2.A.5) family.

The protein resides in the golgi apparatus. It localises to the trans-Golgi network membrane. The protein localises to the cell membrane. It is found in the cytoplasm. Its subcellular location is the perinuclear region. The protein resides in the mitochondrion. It localises to the nucleus. The enzyme catalyses Zn(2+)(in) = Zn(2+)(out). Transports zinc ions across cell and organelle membranes into the cytoplasm and regulates intracellular zinc homeostasis. Participates in the zinc ions efflux out of the secretory compartments. Regulates intracellular zinc level, resulting in the enhancement of AKT1 and MAPK3/MAPK1 (Erk1/2) phosphorylation in response to the BCR activation. Also functions as a membrane androgen receptor that mediates, through a G protein, the non-classical androgen signaling pathway, characterized by the activation of MAPK3/MAPK1 (Erk1/2) and transcription factors CREB1 or ATF1. This pathway contributes to CLDN1 and CLDN5 expression and tight junction formation between adjacent Sertoli cells. Mediates androgen-induced vascular endothelial cell proliferation through activation of an inhibitory G protein leading to the AKT1 and MAPK3/MAPK1 (Erk1/2) activation which in turn modulate inhibition (phosphorylation) of GSK3B and CCND1 transcription. Moreover, has dual functions as a membrane-bound androgen receptor and as an androgen-dependent zinc transporter both of which are mediated through an inhibitory G protein (Gi) that mediates both MAP kinase and zinc signaling leading to the androgen-dependent apoptotic process. The sequence is that of Zinc transporter ZIP9 from Mus musculus (Mouse).